We begin with the raw amino-acid sequence, 199 residues long: Transgelin-3 (199 aa).

The 113-residue stretch at 24–136 (ADLENKLVDW…RTLMALGSVA (113 aa)) folds into the Calponin-homology (CH) domain. Position 163 is a phosphoserine (Ser163). The Calponin-like repeat unit spans residues 174–199 (IGLQMGSNKGASQAGMTGYGMPRQIM). Positions 178-188 (MGSNKGASQAG) are enriched in polar residues. The segment at 178–199 (MGSNKGASQAGMTGYGMPRQIM) is disordered.

Belongs to the calponin family.

In Bos taurus (Bovine), this protein is Transgelin-3 (TAGLN3).